Here is a 543-residue protein sequence, read N- to C-terminus: CTP synthase (543 aa).

An amidoligase domain region spans residues methionine 1 to isoleucine 265. CTP is bound at residue serine 13. Serine 13 contributes to the UTP binding site. ATP is bound at residue serine 14 to leucine 19. Residue tyrosine 54 coordinates L-glutamine. Aspartate 71 contributes to the ATP binding site. The Mg(2+) site is built by aspartate 71 and glutamate 139. CTP is bound by residues aspartate 146–glutamate 148, lysine 186–glutamine 191, and lysine 222. UTP contacts are provided by residues lysine 186–glutamine 191 and lysine 222. Residue arginine 238 to alanine 240 coordinates ATP. The 252-residue stretch at threonine 291 to leucine 542 folds into the Glutamine amidotransferase type-1 domain. Glycine 353 provides a ligand contact to L-glutamine. The active-site Nucleophile; for glutamine hydrolysis is cysteine 380. L-glutamine-binding positions include phenylalanine 381 to glutamine 384, glutamate 404, and arginine 470. Active-site residues include histidine 515 and glutamate 517.

This sequence belongs to the CTP synthase family. As to quaternary structure, homotetramer.

It catalyses the reaction UTP + L-glutamine + ATP + H2O = CTP + L-glutamate + ADP + phosphate + 2 H(+). The enzyme catalyses L-glutamine + H2O = L-glutamate + NH4(+). It carries out the reaction UTP + NH4(+) + ATP = CTP + ADP + phosphate + 2 H(+). It functions in the pathway pyrimidine metabolism; CTP biosynthesis via de novo pathway; CTP from UDP: step 2/2. Allosterically activated by GTP, when glutamine is the substrate; GTP has no effect on the reaction when ammonia is the substrate. The allosteric effector GTP functions by stabilizing the protein conformation that binds the tetrahedral intermediate(s) formed during glutamine hydrolysis. Inhibited by the product CTP, via allosteric rather than competitive inhibition. In terms of biological role, catalyzes the ATP-dependent amination of UTP to CTP with either L-glutamine or ammonia as the source of nitrogen. Regulates intracellular CTP levels through interactions with the four ribonucleotide triphosphates. The sequence is that of CTP synthase from Rhodopseudomonas palustris (strain BisA53).